The chain runs to 506 residues: UDP-N-acetylglucosamine--peptide N-acetylglucosaminyltransferase GtfA subunit (506 aa).

Residues 1 to 78 (MTVYNINLGI…FTDIKIAPTT (78 aa)) are N-terminus R-fold-1. 16–19 (GVEY) is a binding site for UDP. The extended beta-sheet domain stretch occupies residues 79-195 (VTLDQVLAQV…LYRFPDRIFY (117 aa)). Positions 196 to 306 (SKAELVRYFL…QPQIATIPVG (111 aa)) are C-terminus R-fold-1. His-242 contacts N-acetyl-D-glucosamine. Positions 307 to 506 (SLDQLTYPKE…LKEVRDDSAL (200 aa)) are R-fold-2. UDP contacts are provided by residues Arg-328, Tyr-357, and 383-385 (GHA). 405–407 (GFG) lines the N-acetyl-D-glucosamine pocket. Residue Thr-409 coordinates UDP.

It belongs to the glycosyltransferase group 1 family. Glycosyltransferase 4 subfamily. As to quaternary structure, forms a heterotetramer with 2 subunits each of GtfA and GtfB. Part of the accessory SecA2/SecY2 protein translocation apparatus required to export cell wall protein GspB.

The protein resides in the cytoplasm. Its subcellular location is the cell membrane. The catalysed reaction is L-seryl-[protein] + UDP-N-acetyl-alpha-D-glucosamine = 3-O-[N-acetyl-alpha-D-glucosaminyl]-L-seryl-[protein] + UDP + H(+). The protein operates within protein modification; protein glycosylation. Required for polymorphic O-glycosylation of GspB, a serine-rich repeat cell wall protein encoded upstream in the same operon. Catalyzes the first step in glycosylation by transferring N-acetylglucosamine from UDP-GlcNAc to serine residues in GspB. Part of the accessory SecA2/SecY2 system specifically required to export GspB. Upon coexpression in E.coli with GtfB glycosylates GspB constructs. Glycosylation probably occurs intracellularly. Requires GtfB for glycosylation activity, it has no activity alone. Does not use UDP-glucose as substrate. Has a fast, probably processive glycosylation phase followed by a slower, non-processive phase. The enzyme probably modifies its tertiary conformation by opening and closing its intersubunit interfaces to accomodate the increasingly glycosylated substrate; protein substrate recognition is provided by GtfB. In Streptococcus gordonii, this protein is UDP-N-acetylglucosamine--peptide N-acetylglucosaminyltransferase GtfA subunit.